The chain runs to 343 residues: DNA-directed RNA polymerase subunit alpha (343 aa).

Residues 1 to 236 (MQEHYYKFWR…EQLQIFLTFD (236 aa)) are alpha N-terminal domain (alpha-NTD). The interval 253 to 343 (LNENLFRSVD…QPPQKRETQQ (91 aa)) is alpha C-terminal domain (alpha-CTD).

It belongs to the RNA polymerase alpha chain family. Homodimer. The RNAP catalytic core consists of 2 alpha, 1 beta, 1 beta' and 1 omega subunit. When a sigma factor is associated with the core the holoenzyme is formed, which can initiate transcription.

It carries out the reaction RNA(n) + a ribonucleoside 5'-triphosphate = RNA(n+1) + diphosphate. Functionally, DNA-dependent RNA polymerase catalyzes the transcription of DNA into RNA using the four ribonucleoside triphosphates as substrates. The polypeptide is DNA-directed RNA polymerase subunit alpha (Bdellovibrio bacteriovorus (strain ATCC 15356 / DSM 50701 / NCIMB 9529 / HD100)).